The sequence spans 289 residues: Shikimate kinase (289 aa).

Residue 84 to 94 (PMASGLSSSSA) participates in ATP binding.

This sequence belongs to the GHMP kinase family. Archaeal shikimate kinase subfamily.

It is found in the cytoplasm. The catalysed reaction is shikimate + ATP = 3-phosphoshikimate + ADP + H(+). The protein operates within metabolic intermediate biosynthesis; chorismate biosynthesis; chorismate from D-erythrose 4-phosphate and phosphoenolpyruvate: step 5/7. This is Shikimate kinase from Methanobrevibacter smithii (strain ATCC 35061 / DSM 861 / OCM 144 / PS).